We begin with the raw amino-acid sequence, 563 residues long: MRLRTAIATLCLTAFTSATSNNSYIATDQTQNAFNDTHFCKVDRNDHVSPSCNVTFNELNAINENIRDDLSALLKSDFFKYFRLDLYKQCSFWDANDGLCLNRACSVDVVEDWDTLPEYWQPEILGSFNNDTMKEADDSDDECKFLDQLCQTSKKPVDIEDTINYCDVNDFNGKNAVLIDLTANPERFTGYGGKQAGQIWSTIYQDNCFTIGETGESLAKDAFYRLVSGFHASIGTHLSKEYLNTKTGKWEPNLDLFMARIGNFPDRVTNMYFNYAVVAKALWKIQPYLPEFSFCDLVNKEIKNKMDNVISQLDTKIFNEDLVFANDLSLTLKDEFRSRFKNVTKIMDCVQCDRCRLWGKIQTTGYATALKILFEINDADEFTKQHIVGKLTKYELIALLQTFGRLSESIESVNMFEKMYGKRLNGSENRLSSFFQNNFFNILKEAGKSIRYTIENINSTKEGKKKTNNSQSHVFDDLKMPKAEIVPRPSNGTVNKWKKAWNTEVNNVLEAFRFIYRSYLDLPRNIWELSLMKVYKFWNKFIGVADYVSEETREPISYKLDIQ.

The first 18 residues, 1–18 (MRLRTAIATLCLTAFTSA), serve as a signal peptide directing secretion. N21, N35, and N53 each carry an N-linked (GlcNAc...) asparagine glycan. Cystine bridges form between C90-C349, C100-C105, C143-C166, C150-C295, and C352-C355. N-linked (GlcNAc...) asparagine glycosylation is present at N130. The FAD site is built by R187, T189, W200, S228, H231, and R260. N342 is a glycosylation site (N-linked (GlcNAc...) asparagine). C352 functions as the Nucleophile in the catalytic mechanism. C355 is a catalytic residue. 4 N-linked (GlcNAc...) asparagine glycosylation sites follow: N425, N458, N468, and N491.

This sequence belongs to the EROs family. May function both as a monomer and a homodimer. The cofactor is FAD. Post-translationally, the Cys-100/Cys-105 and Cys-352/Cys-355 disulfide bonds constitute the redox-active center. The Cys-100/Cys-105 disulfide bond may accept electron from PDI1 and funnel them to the active site disulfide Cys-352/Cys-355. In terms of processing, N-glycosylated.

The protein localises to the endoplasmic reticulum membrane. Its activity is regulated as follows. Enzyme activity is tightly regulated to prevent the accumulation of reactive oxygen species in the endoplasmic reticulum. Reversibly down-regulated by the formation of disulfide bonds between Cys-150 and Cys-295. In terms of biological role, essential oxidoreductase that oxidizes proteins in the endoplasmic reticulum to produce disulfide bonds. Acts by oxidizing directly PDI1 isomerase through a direct disulfide exchange. Does not act as a direct oxidant of folding substrate, but relies on PDI1 to transfer oxidizing equivalent. Also able to oxidize directly the PDI related protein MPD2. Does not oxidize all PDI related proteins, suggesting that it can discriminate between PDI1 and related proteins. Reoxidation of ERO1 probably involves electron transfer to molecular oxygen via FAD. Acts independently of glutathione. May be responsible for a significant proportion of reactive oxygen species (ROS) in the cell, thereby being a source of oxidative stress. The polypeptide is Endoplasmic oxidoreductin-1 (ERO1) (Saccharomyces cerevisiae (strain ATCC 204508 / S288c) (Baker's yeast)).